A 174-amino-acid chain; its full sequence is Ribulose bisphosphate carboxylase small subunit, chloroplastic 1 (174 aa).

Residues 1–45 (MAPAVMASSATTVAPFQGLKSTAGLPVSRRSRGSLGSVSNGGRIR) constitute a chloroplast transit peptide.

It belongs to the RuBisCO small chain family. As to quaternary structure, heterohexadecamer of 8 large and 8 small subunits.

The protein localises to the plastid. The protein resides in the chloroplast. RuBisCO catalyzes two reactions: the carboxylation of D-ribulose 1,5-bisphosphate, the primary event in carbon dioxide fixation, as well as the oxidative fragmentation of the pentose substrate. Both reactions occur simultaneously and in competition at the same active site. Although the small subunit is not catalytic it is essential for maximal activity. This is Ribulose bisphosphate carboxylase small subunit, chloroplastic 1 from Triticum aestivum (Wheat).